Reading from the N-terminus, the 31-residue chain is Photosystem I reaction center subunit XII (31 aa).

A helical transmembrane segment spans residues 7 to 26; sequence QIYIALLTALIPAFFALKLG.

Belongs to the PsaM family.

The protein resides in the plastid. It is found in the chloroplast thylakoid membrane. The protein is Photosystem I reaction center subunit XII of Euglena mutabilis.